A 336-amino-acid polypeptide reads, in one-letter code: Dihydroorotate dehydrogenase (quinone) (336 aa).

Residues 62 to 66 and threonine 86 each bind FMN; that span reads AGLDK. Lysine 66 provides a ligand contact to substrate. Residue 111–115 coordinates substrate; sequence NRMGF. Residues asparagine 139 and asparagine 172 each contribute to the FMN site. Asparagine 172 is a binding site for substrate. Residue serine 175 is the Nucleophile of the active site. Position 177 (asparagine 177) interacts with substrate. FMN-binding residues include lysine 217 and threonine 245. 246–247 serves as a coordination point for substrate; it reads NT. Residues glycine 268, glycine 297, and 318 to 319 each bind FMN; that span reads YT.

The protein belongs to the dihydroorotate dehydrogenase family. Type 2 subfamily. As to quaternary structure, monomer. It depends on FMN as a cofactor.

The protein resides in the cell membrane. The catalysed reaction is (S)-dihydroorotate + a quinone = orotate + a quinol. The protein operates within pyrimidine metabolism; UMP biosynthesis via de novo pathway; orotate from (S)-dihydroorotate (quinone route): step 1/1. Its function is as follows. Catalyzes the conversion of dihydroorotate to orotate with quinone as electron acceptor. The sequence is that of Dihydroorotate dehydrogenase (quinone) from Pseudoalteromonas translucida (strain TAC 125).